The chain runs to 308 residues: Ycf92-like protein (308 aa).

Helical transmembrane passes span 41-61 (FANN…TLIA), 75-95 (LLTL…GLGV), 153-173 (ISTI…TTAP), 192-212 (IPVT…PLVL), and 288-308 (WLAI…GNQI).

It belongs to the ycf92 family.

Its subcellular location is the membrane. The protein is Ycf92-like protein of Nostoc sp. (strain PCC 7120 / SAG 25.82 / UTEX 2576).